A 95-amino-acid chain; its full sequence is Small ribosomal subunit protein bS16 (95 aa).

Belongs to the bacterial ribosomal protein bS16 family.

This Thermotoga neapolitana (strain ATCC 49049 / DSM 4359 / NBRC 107923 / NS-E) protein is Small ribosomal subunit protein bS16.